The following is an 875-amino-acid chain: MSEPKPIQDTLDRRHSRESSISSASTTSLVFDRLAEESEKNHDASSRPHPSAARHAYTDDNSDAIKESDINDPETGPFLGASSETTPPRKGVDRKLKKVLLIVGGFFVAAWIVSLVVFLTNKSYKHGSQIDHDPAATNRKSGKRVTLDQVQSGFWRPTSHTFSWIPGPDGEDGLLLEQEARGKHFLVVEDVRSQGSADGEAHPDAAESRTLIKDPWFYWGDQQHSILQTWPSKNQKKVLVATQKQRNWRHSFTALYWVFDVESQSAEPLDPAHPEERVQLATWNAQSDAIVFTRSNNLFLRKLADDKVTPITTDGGPEYFYGIPDWVYEEEVFSGNSATWWSADGKHVAFLRTNETEVPEYPIQYFVSRPSGAEPEVGEENYPEVRQIKYPKVGSPNPVVDLLFYDVEKGDVFTVDIDGDFPEKDKLINFVMWADGNVLVKTTNRVSDVLQVNLIDIVARTGKTVQHVDVAKIDGGWFEISHVMYIPADPKNGRPHDGYVDTVIHNDGDHLAYFTPMDNPKPVYITEGPGWEVDGSASAVDLKNNLVYFRSTKESSIQRHIYSVHLNGTDMKPFTDTTHESYYDVSFSSGAGFGLLSYQGPKVPWQKVVSTPSNPKSYERIIEENKDLTQQAKKHELPVLEYGTIKVDDVELNYVERRPPHFDKNKKYPVLFQQYSGPGSQTVTKKFAVDFQSSDGGRRTTRSPRRATGRPSATSTPTAFAIWGWSYGGFATLKTLETDAGRTFRYGMAVAPVTDWRFYDSIYTERYMRTPDLNRNGYQQTAISNTTALGANERFLVMHGVADDNVHMQNTLTLLDELDLAGVENYDVHVFPDSDHSIYFHNANRIVYDKLSNWLINAFNGEWVKVNDAKPKIES.

Positions 1-90 are disordered; the sequence is MSEPKPIQDT…ASSETTPPRK (90 aa). Over 1–98 the chain is Cytoplasmic; it reads MSEPKPIQDT…RKGVDRKLKK (98 aa). Residues 19–28 show a composition bias toward low complexity; the sequence is SSISSASTTS. A compositionally biased stretch (basic and acidic residues) spans 33 to 46; that stretch reads RLAEESEKNHDASS. The helical; Signal-anchor for type II membrane protein transmembrane segment at 99 to 119 threads the bilayer; sequence VLLIVGGFFVAAWIVSLVVFL. Residues 120 to 875 are Vacuolar-facing; it reads TNKSYKHGSQ…VNDAKPKIES (756 aa). Residues N354 and N567 are each glycosylated (N-linked (GlcNAc...) asparagine). The disordered stretch occupies residues 689–715; the sequence is VDFQSSDGGRRTTRSPRRATGRPSATS. Basic residues predominate over residues 699-708; it reads RTTRSPRRAT. The active-site Charge relay system is the S726. A glycan (N-linked (GlcNAc...) asparagine) is linked at N785. Active-site charge relay system residues include D803 and H836.

This sequence belongs to the peptidase S9B family.

The protein localises to the vacuole membrane. It catalyses the reaction Release of an N-terminal dipeptide, Xaa-Yaa-|-Zaa-, from a polypeptide, preferentially when Yaa is Pro, provided Zaa is neither Pro nor hydroxyproline.. Type IV dipeptidyl-peptidase which removes N-terminal dipeptides sequentially from polypeptides having unsubstituted N-termini provided that the penultimate residue is proline. In Verticillium alfalfae (strain VaMs.102 / ATCC MYA-4576 / FGSC 10136) (Verticillium wilt of alfalfa), this protein is Probable dipeptidyl-aminopeptidase B (DAPB).